Consider the following 276-residue polypeptide: UPF0276 protein PA4106 (276 aa).

This sequence belongs to the UPF0276 family.

The chain is UPF0276 protein PA4106 from Pseudomonas aeruginosa (strain ATCC 15692 / DSM 22644 / CIP 104116 / JCM 14847 / LMG 12228 / 1C / PRS 101 / PAO1).